A 1408-amino-acid chain; its full sequence is DNA-directed RNA polymerase subunit beta' (1408 aa).

C70, C72, C85, and C88 together coordinate Zn(2+). Mg(2+) contacts are provided by D460, D462, and D464. Residues C822, C896, C903, and C906 each contribute to the Zn(2+) site. The tract at residues 1386 to 1408 is disordered; it reads DTGEAPPLSEEETGEIRNSGYAV.

It belongs to the RNA polymerase beta' chain family. As to quaternary structure, the RNAP catalytic core consists of 2 alpha, 1 beta, 1 beta' and 1 omega subunit. When a sigma factor is associated with the core the holoenzyme is formed, which can initiate transcription. Mg(2+) is required as a cofactor. Requires Zn(2+) as cofactor.

The catalysed reaction is RNA(n) + a ribonucleoside 5'-triphosphate = RNA(n+1) + diphosphate. Functionally, DNA-dependent RNA polymerase catalyzes the transcription of DNA into RNA using the four ribonucleoside triphosphates as substrates. This is DNA-directed RNA polymerase subunit beta' from Nitrosospira multiformis (strain ATCC 25196 / NCIMB 11849 / C 71).